Here is a 237-residue protein sequence, read N- to C-terminus: tRNA (guanine-N(7)-)-methyltransferase (237 aa).

S-adenosyl-L-methionine contacts are provided by D35, E60, N87, and D113. D113 is an active-site residue. Residues K117 and D149 each coordinate substrate.

The protein belongs to the class I-like SAM-binding methyltransferase superfamily. TrmB family.

The enzyme catalyses guanosine(46) in tRNA + S-adenosyl-L-methionine = N(7)-methylguanosine(46) in tRNA + S-adenosyl-L-homocysteine. It participates in tRNA modification; N(7)-methylguanine-tRNA biosynthesis. Functionally, catalyzes the formation of N(7)-methylguanine at position 46 (m7G46) in tRNA. In Synechococcus sp. (strain WH7803), this protein is tRNA (guanine-N(7)-)-methyltransferase.